Here is a 1051-residue protein sequence, read N- to C-terminus: Anucleate primary sterigmata protein B (1051 aa).

Coiled coils occupy residues 10–200 (IDRL…YAIA) and 239–285 (STLV…ELKL). A compositionally biased stretch (basic and acidic residues) spans 58 to 90 (KDNQGLKRKIRDLEKQLKDQQSDKESMLNHDPE). Disordered stretches follow at residues 58 to 100 (KDNQ…DRDH) and 141 to 160 (LKSL…REER). The segment covering 294–303 (AGDSILDRSA) has biased composition (basic and acidic residues). 4 disordered regions span residues 294-329 (AGDS…AERE), 877-902 (NHPR…LAER), 909-928 (NTAA…QMTN), and 984-1051 (EERD…DIEV). The span at 309-321 (RPSSSISDRTGQS) shows a compositional bias: polar residues. 2 coiled-coil regions span residues 325–743 (DAER…RNSM) and 787–878 (RNLL…LQNH). Polar residues-rich tracts occupy residues 877 to 897 (NHPR…SSTI) and 916 to 928 (ARSS…QMTN). A coiled-coil region spans residues 950 to 1004 (NQEVWIKRLHELERRLKAEREARLLDRNGARRRLEERDAENKRLRAQLDRQRLRQ). Basic and acidic residues-rich tracts occupy residues 984–1001 (EERD…DRQR) and 1028–1040 (EGYR…HSSS).

It is found in the cytoplasm. Its function is as follows. Involved in regulation of nuclear migration. May be involved in regulating nuclear positioning. In Emericella nidulans (strain FGSC A4 / ATCC 38163 / CBS 112.46 / NRRL 194 / M139) (Aspergillus nidulans), this protein is Anucleate primary sterigmata protein B (apsB).